The following is a 724-amino-acid chain: Propionyl-CoA carboxylase alpha chain, mitochondrial (724 aa).

The Biotin carboxylation domain maps to 48–495; the sequence is KFDKILIANR…TTKYLPEVYP (448 aa). ATP contacts are provided by residues lysine 163, 195–256, glutamate 247, and asparagine 282; that span reads SRDI…PRHI. Positions 167 to 364 constitute an ATP-grasp domain; sequence KKIATAARVS…IVQQMLRVSY (198 aa). Mg(2+) contacts are provided by glutamate 322, glutamate 335, and asparagine 337. Positions 322, 335, and 337 each coordinate Mn(2+). The active site involves arginine 339. Phenylalanine 395 provides a ligand contact to biotin. In terms of domain architecture, Biotinyl-binding spans 649-724; that stretch reads KAKVDLSTVV…DEGEVLVELE (76 aa). An N6-biotinyllysine modification is found at lysine 690.

As to quaternary structure, the holoenzyme is a dodecamer composed of 6 alpha subunits and 6 beta subunits. Interacts with sir-2.2 and sir-2.3. Biotin serves as cofactor. It depends on Mg(2+) as a cofactor. The cofactor is Mn(2+). Post-translationally, the biotin cofactor is covalently attached to the C-terminal biotinyl-binding domain and is required for the catalytic activity.

The protein localises to the mitochondrion matrix. The catalysed reaction is propanoyl-CoA + hydrogencarbonate + ATP = (S)-methylmalonyl-CoA + ADP + phosphate + H(+). It carries out the reaction butanoyl-CoA + hydrogencarbonate + ATP = (2S)-ethylmalonyl-CoA + ADP + phosphate + H(+). It functions in the pathway metabolic intermediate metabolism; propanoyl-CoA degradation; succinyl-CoA from propanoyl-CoA: step 1/3. Its function is as follows. This is one of the 2 subunits of the biotin-dependent propionyl-CoA carboxylase (PCC), a mitochondrial enzyme involved in the catabolism of odd chain fatty acids, branched-chain amino acids isoleucine, threonine, methionine, and valine and other metabolites. Propionyl-CoA carboxylase catalyzes the carboxylation of propionyl-CoA/propanoyl-CoA to D-methylmalonyl-CoA/(S)-methylmalonyl-CoA. Within the holoenzyme, the alpha subunit catalyzes the ATP-dependent carboxylation of the biotin carried by the biotin carboxyl carrier (BCC) domain, while the beta subunit then transfers the carboxyl group from carboxylated biotin to propionyl-CoA. Propionyl-CoA carboxylase also significantly acts on butyryl-CoA/butanoyl-CoA, which is converted to ethylmalonyl-CoA/(2S)-ethylmalonyl-CoA. Other alternative minor substrates include (2E)-butenoyl-CoA/crotonoyl-CoA. This Caenorhabditis elegans protein is Propionyl-CoA carboxylase alpha chain, mitochondrial (pcca-1).